The primary structure comprises 228 residues: Cytidylate kinase (228 aa).

ATP is bound at residue 12–20 (GPSGSGKGT).

This sequence belongs to the cytidylate kinase family. Type 1 subfamily.

Its subcellular location is the cytoplasm. The enzyme catalyses CMP + ATP = CDP + ADP. It catalyses the reaction dCMP + ATP = dCDP + ADP. In Pseudomonas putida (strain W619), this protein is Cytidylate kinase.